We begin with the raw amino-acid sequence, 320 residues long: Malate dehydrogenase (320 aa).

NAD(+) is bound by residues 10 to 15 (GAGQIG) and aspartate 34. Arginine 83 and arginine 89 together coordinate substrate. NAD(+) contacts are provided by residues asparagine 96 and 119–121 (ITN). Substrate is bound by residues asparagine 121 and arginine 152. Residue histidine 176 is the Proton acceptor of the active site.

Belongs to the LDH/MDH superfamily. MDH type 3 family.

The enzyme catalyses (S)-malate + NAD(+) = oxaloacetate + NADH + H(+). Functionally, catalyzes the reversible oxidation of malate to oxaloacetate. This chain is Malate dehydrogenase, found in Jannaschia sp. (strain CCS1).